We begin with the raw amino-acid sequence, 292 residues long: Lipoyl synthase (292 aa).

The [4Fe-4S] cluster site is built by cysteine 38, cysteine 43, cysteine 49, cysteine 64, cysteine 68, cysteine 71, and serine 277. A Radical SAM core domain is found at 50–266; sequence WSKGTATFLL…REIALDAGFR (217 aa).

The protein belongs to the radical SAM superfamily. Lipoyl synthase family. [4Fe-4S] cluster is required as a cofactor.

It is found in the cytoplasm. The enzyme catalyses [[Fe-S] cluster scaffold protein carrying a second [4Fe-4S](2+) cluster] + N(6)-octanoyl-L-lysyl-[protein] + 2 oxidized [2Fe-2S]-[ferredoxin] + 2 S-adenosyl-L-methionine + 4 H(+) = [[Fe-S] cluster scaffold protein] + N(6)-[(R)-dihydrolipoyl]-L-lysyl-[protein] + 4 Fe(3+) + 2 hydrogen sulfide + 2 5'-deoxyadenosine + 2 L-methionine + 2 reduced [2Fe-2S]-[ferredoxin]. Its pathway is protein modification; protein lipoylation via endogenous pathway; protein N(6)-(lipoyl)lysine from octanoyl-[acyl-carrier-protein]: step 2/2. Catalyzes the radical-mediated insertion of two sulfur atoms into the C-6 and C-8 positions of the octanoyl moiety bound to the lipoyl domains of lipoate-dependent enzymes, thereby converting the octanoylated domains into lipoylated derivatives. This Chlorobaculum parvum (strain DSM 263 / NCIMB 8327) (Chlorobium vibrioforme subsp. thiosulfatophilum) protein is Lipoyl synthase.